A 475-amino-acid chain; its full sequence is Ribulose bisphosphate carboxylase large chain (475 aa).

The propeptide occupies 1–2 (MS). P3 is modified (N-acetylproline). At K14 the chain carries N6,N6,N6-trimethyllysine. Residues N123 and T173 each contribute to the substrate site. K175 (proton acceptor) is an active-site residue. Position 177 (K177) interacts with substrate. Mg(2+) contacts are provided by K201, D203, and E204. K201 carries the N6-carboxylysine modification. H294 acts as the Proton acceptor in catalysis. 3 residues coordinate substrate: R295, H327, and S379.

Belongs to the RuBisCO large chain family. Type I subfamily. As to quaternary structure, heterohexadecamer of 8 large chains and 8 small chains; disulfide-linked. The disulfide link is formed within the large subunit homodimers. The cofactor is Mg(2+). In terms of processing, the disulfide bond which can form in the large chain dimeric partners within the hexadecamer appears to be associated with oxidative stress and protein turnover.

It is found in the plastid. It localises to the chloroplast. The catalysed reaction is 2 (2R)-3-phosphoglycerate + 2 H(+) = D-ribulose 1,5-bisphosphate + CO2 + H2O. It carries out the reaction D-ribulose 1,5-bisphosphate + O2 = 2-phosphoglycolate + (2R)-3-phosphoglycerate + 2 H(+). In terms of biological role, ruBisCO catalyzes two reactions: the carboxylation of D-ribulose 1,5-bisphosphate, the primary event in carbon dioxide fixation, as well as the oxidative fragmentation of the pentose substrate in the photorespiration process. Both reactions occur simultaneously and in competition at the same active site. The sequence is that of Ribulose bisphosphate carboxylase large chain from Cryptomeria japonica (Japanese cedar).